The primary structure comprises 186 residues: Putative manganese efflux pump MntP (186 aa).

A run of 6 helical transmembrane segments spans residues 5–25 (VLIG…MDAF), 41–61 (VFQI…GGMI), 72–92 (ALAG…MIVA), 107–127 (FGLF…GLSL), 135–155 (ILTI…GLLL), and 166–186 (YSEA…LLPI).

Belongs to the MntP (TC 9.B.29) family.

The protein resides in the cell membrane. Functionally, probably functions as a manganese efflux pump. The protein is Putative manganese efflux pump MntP of Bacillus licheniformis (strain ATCC 14580 / DSM 13 / JCM 2505 / CCUG 7422 / NBRC 12200 / NCIMB 9375 / NCTC 10341 / NRRL NRS-1264 / Gibson 46).